The primary structure comprises 942 residues: Apolipoprotein B receptor (942 aa).

Disordered regions lie at residues 66–212 (GLRS…VTED), 240–269 (ERMV…QAML), 283–487 (DSLG…SPER), 501–607 (AGPE…VPWE), and 671–942 (EGRG…PKPQ). Composition is skewed to basic and acidic residues over residues 106 to 123 (QAER…DARG), 132 to 143 (PEAEPGTHRDRS), 240 to 252 (ERMV…ERAR), 312 to 330 (EADK…EAEV), and 338 to 352 (EAER…HIAE). The span at 353-370 (EEAMGEQETEGSFEDEER) shows a compositional bias: acidic residues. Ser364 carries the post-translational modification Phosphoserine. The segment covering 384–397 (EEVRAEESSREKRN) has biased composition (basic and acidic residues). Residues 415–425 (PDWEDSPEVST) are compositionally biased toward acidic residues. Basic and acidic residues-rich tracts occupy residues 444 to 458 (LRVK…ELVR) and 466 to 475 (QLEEGQKGQE). Phosphoserine is present on residues Ser484 and Ser520. Basic and acidic residues-rich tracts occupy residues 514 to 531 (GVDR…EAGK) and 672 to 687 (GRGE…ETTE). Acidic residues predominate over residues 709–721 (QEIDGTEEGEQAE). The span at 837-853 (SRLDVSVPRSRVLLSRS) shows a compositional bias: low complexity. The segment covering 854–863 (SSRRRSRPSF) has biased composition (basic residues).

As to quaternary structure, homodimer. Post-translationally, there are 2 forms in macrophages, the membrane-binding proteins 200 kDa (MBP 200) and 235 kDa (MBP 235), that can be reduced into a single active ligand-binding species with intermediate mobility (MBP 200R). As to expression, highly expressed in spleen, lung and skeletal muscle, and weakly in brain, heart, kidney, and testis.

The protein resides in the cell membrane. Functionally, macrophage receptor that binds to the apolipoprotein B48 (APOB) of dietary triglyceride (TG)-rich lipoproteins (TRL) or to a like domain of APOB in hypertriglyceridemic very low density lipoprotein (HTG-VLDL). Binds and internalizes TRL when out of the context of the macrophage. May provide essential lipids to reticuloendothelial cells. Could also be involved in foam cell formation with elevated TRL and remnant lipoprotein (RLP). Mediates the rapid high-affinity uptake of chylomicrons (CM), HTG-VLDL, and trypsinized (tryp) VLDL devoid of APOE in vitro in macrophages. This Mus musculus (Mouse) protein is Apolipoprotein B receptor.